A 189-amino-acid chain; its full sequence is MPRASEIKKGFAINVDGKTVLVKDIEVTTPGGRGGQKIYRFRGHDVATGVKTEVRHKADEIVETIDVTKRAVMFSYVDGNEYIFMDNEDYTQFIFNGEMIEDELLFINEDTQGMYAILIDGTAATLELPTSVELVIEETDPSIKGASASARTKPARLSTGLTVQVPEYIATGDKVVVNTAERKYMNRAS.

It belongs to the elongation factor P family.

The polypeptide is Elongation factor P-like protein (Vibrio atlanticus (strain LGP32) (Vibrio splendidus (strain Mel32))).